We begin with the raw amino-acid sequence, 1503 residues long: Lysophospholipase NTE1 (1503 aa).

Residues 1 to 25 (MDSSTAALATASAKLDAVAQQGSSS) lie on the Cytoplasmic side of the membrane. The helical transmembrane segment at 26–46 (WIGFFANIILGIISLVYSILY) threads the bilayer. The Lumenal segment spans residues 47–71 (SVLKLTTFSIPSLLYTLFSTSLTVT). A helical membrane pass occupies residues 72–92 (MNATTLMLIIVLVFSLVSWFV). Topologically, residues 93 to 1503 (RYRYLNMYSR…RTMAPRRASI (1411 aa)) are cytoplasmic. Disordered stretches follow at residues 252–348 (RHGG…TTSV), 454–561 (TKGI…SNPF), and 722–745 (KNES…RFMD). Composition is skewed to polar residues over residues 262 to 272 (TSATETYTSSR), 285 to 302 (STVS…SSHG), 487 to 496 (QRPSSVTASP), 506 to 542 (KHTS…STLL), 552 to 561 (PLSQRTSNPF), and 723 to 737 (NESS…QQGS). A nucleoside 3',5'-cyclic phosphate is bound by residues 658 to 777 (GLPV…GYVG) and 821 to 941 (RLTN…IASR). The region spanning 1200-1364 (LVLGGGGARG…IDNLTVSHMK (165 aa)) is the PNPLA domain. Positions 1204-1209 (GGGARG) match the GXGXXG motif. Positions 1231 to 1235 (GTSIG) match the GXSXG motif. The active-site Nucleophile is S1233. Catalysis depends on D1351, which acts as the Proton acceptor. The DGA/G signature appears at 1351-1353 (DGG).

This sequence belongs to the NTE family.

The protein localises to the endoplasmic reticulum membrane. It catalyses the reaction a 1-acyl-sn-glycero-3-phosphocholine + H2O = sn-glycerol 3-phosphocholine + a fatty acid + H(+). Inhibited by organophosphorus esters. In terms of biological role, intracellular phospholipase B that catalyzes the double deacylation of phosphatidylcholine (PC) to glycerophosphocholine (GroPCho). Plays an important role in membrane lipid homeostasis. Responsible for the rapid PC turnover in response to inositol, elevated temperatures, or when choline is present in the growth medium. The protein is Lysophospholipase NTE1 (NTE1) of Pyricularia oryzae (strain 70-15 / ATCC MYA-4617 / FGSC 8958) (Rice blast fungus).